We begin with the raw amino-acid sequence, 354 residues long: 3-dehydroquinate synthase (354 aa).

NAD(+)-binding positions include 100 to 104 (GATGD), 124 to 125 (TT), Lys136, Lys145, and 163 to 166 (FLKT). Glu178, His242, and His256 together coordinate Zn(2+).

It belongs to the sugar phosphate cyclases superfamily. Dehydroquinate synthase family. The cofactor is NAD(+). Requires Co(2+) as cofactor. Zn(2+) is required as a cofactor.

The protein resides in the cytoplasm. It catalyses the reaction 7-phospho-2-dehydro-3-deoxy-D-arabino-heptonate = 3-dehydroquinate + phosphate. Its pathway is metabolic intermediate biosynthesis; chorismate biosynthesis; chorismate from D-erythrose 4-phosphate and phosphoenolpyruvate: step 2/7. Its function is as follows. Catalyzes the conversion of 3-deoxy-D-arabino-heptulosonate 7-phosphate (DAHP) to dehydroquinate (DHQ). This is 3-dehydroquinate synthase from Staphylococcus aureus (strain COL).